A 325-amino-acid chain; its full sequence is Glycerol-3-phosphate dehydrogenase [NAD(P)+] (325 aa).

NADPH is bound by residues Trp15, Arg35, and Lys107. Positions 107, 135, and 137 each coordinate sn-glycerol 3-phosphate. NADPH is bound at residue Ala139. Lys190, Asp243, Ser253, Arg254, and Asn255 together coordinate sn-glycerol 3-phosphate. Lys190 serves as the catalytic Proton acceptor. Arg254 is a binding site for NADPH. NADPH contacts are provided by Leu272 and Glu274.

It belongs to the NAD-dependent glycerol-3-phosphate dehydrogenase family.

The protein localises to the cytoplasm. It carries out the reaction sn-glycerol 3-phosphate + NAD(+) = dihydroxyacetone phosphate + NADH + H(+). It catalyses the reaction sn-glycerol 3-phosphate + NADP(+) = dihydroxyacetone phosphate + NADPH + H(+). Its pathway is membrane lipid metabolism; glycerophospholipid metabolism. Catalyzes the reduction of the glycolytic intermediate dihydroxyacetone phosphate (DHAP) to sn-glycerol 3-phosphate (G3P), the key precursor for phospholipid synthesis. This is Glycerol-3-phosphate dehydrogenase [NAD(P)+] from Afipia carboxidovorans (strain ATCC 49405 / DSM 1227 / KCTC 32145 / OM5) (Oligotropha carboxidovorans).